Consider the following 324-residue polypeptide: DNA repair and recombination protein RadA (324 aa).

107 to 114 (GEFGSGKS) is an ATP binding site.

It belongs to the eukaryotic RecA-like protein family.

Involved in DNA repair and in homologous recombination. Binds and assemble on single-stranded DNA to form a nucleoprotein filament. Hydrolyzes ATP in a ssDNA-dependent manner and promotes DNA strand exchange between homologous DNA molecules. In Methanoculleus marisnigri (strain ATCC 35101 / DSM 1498 / JR1), this protein is DNA repair and recombination protein RadA.